The following is a 248-amino-acid chain: Isoprenyl transferase (248 aa).

D28 is a catalytic residue. D28 contacts Mg(2+). Substrate is bound by residues 29–32 (GNGR), W33, R41, H45, and 73–75 (SSE). N76 functions as the Proton acceptor in the catalytic mechanism. Residues W77, R79, R196, and 202 to 204 (RLS) contribute to the substrate site. Mg(2+) is bound at residue E215.

It belongs to the UPP synthase family. As to quaternary structure, homodimer. The cofactor is Mg(2+).

Catalyzes the condensation of isopentenyl diphosphate (IPP) with allylic pyrophosphates generating different type of terpenoids. This Zymomonas mobilis subsp. mobilis (strain ATCC 31821 / ZM4 / CP4) protein is Isoprenyl transferase.